The chain runs to 190 residues: Potassium-transporting ATPase KdpC subunit (190 aa).

The helical transmembrane segment at 9–29 (VMFILFTIICGGIYPSVVTGI) threads the bilayer.

The protein belongs to the KdpC family. As to quaternary structure, the system is composed of three essential subunits: KdpA, KdpB and KdpC.

It localises to the cell inner membrane. Functionally, part of the high-affinity ATP-driven potassium transport (or Kdp) system, which catalyzes the hydrolysis of ATP coupled with the electrogenic transport of potassium into the cytoplasm. This subunit acts as a catalytic chaperone that increases the ATP-binding affinity of the ATP-hydrolyzing subunit KdpB by the formation of a transient KdpB/KdpC/ATP ternary complex. This chain is Potassium-transporting ATPase KdpC subunit, found in Citrifermentans bemidjiense (strain ATCC BAA-1014 / DSM 16622 / JCM 12645 / Bem) (Geobacter bemidjiensis).